The primary structure comprises 199 residues: MKFSPLVDELIQSLRCLPGVGPKSAQRMAFALLESDRKAGIRLADTLSRAMSDVGHCQKCRTFTEQSLCPICSSSRRGEADTLCVVETPADVLAIESGGHFQGRYFVLQGHLSPLDGIGPEELGLSLLEGQLVGGGISELILATNPTVEGDATAHYIADIARRAGVAVSRIAHGVPVGGELEYVDSTTLALSFNGRLPL.

The C4-type zinc-finger motif lies at 57 to 72; it reads CQKCRTFTEQSLCPIC. One can recognise a Toprim domain in the interval 81-176; sequence DTLCVVETPA…AVSRIAHGVP (96 aa).

It belongs to the RecR family.

Functionally, may play a role in DNA repair. It seems to be involved in an RecBC-independent recombinational process of DNA repair. It may act with RecF and RecO. The sequence is that of Recombination protein RecR from Shewanella amazonensis (strain ATCC BAA-1098 / SB2B).